Consider the following 319-residue polypeptide: Ribonuclease Z (319 aa).

Residues His62, His64, Asp66, His67, His139, Asp209, and His268 each contribute to the Zn(2+) site. The active-site Proton acceptor is the Asp66.

The protein belongs to the RNase Z family. As to quaternary structure, homodimer. Zn(2+) is required as a cofactor.

It catalyses the reaction Endonucleolytic cleavage of RNA, removing extra 3' nucleotides from tRNA precursor, generating 3' termini of tRNAs. A 3'-hydroxy group is left at the tRNA terminus and a 5'-phosphoryl group is left at the trailer molecule.. Its function is as follows. Zinc phosphodiesterase, which displays some tRNA 3'-processing endonuclease activity. Probably involved in tRNA maturation, by removing a 3'-trailer from precursor tRNA. This Pseudomonas putida (strain GB-1) protein is Ribonuclease Z.